A 359-amino-acid polypeptide reads, in one-letter code: UPF0284 protein MTH_1426 (359 aa).

This sequence belongs to the UPF0284 family.

This is UPF0284 protein MTH_1426 from Methanothermobacter thermautotrophicus (strain ATCC 29096 / DSM 1053 / JCM 10044 / NBRC 100330 / Delta H) (Methanobacterium thermoautotrophicum).